A 156-amino-acid polypeptide reads, in one-letter code: Endogenous retrovirus group K member 6 Pro protein (156 aa).

One can recognise a Peptidase A2 domain in the interval 21–96 (FEGLVDTGAD…IPLNLWGRDL (76 aa)). Residue D26 is part of the active site. Positions 111-156 (YSPTSQKIMTKMGYIPGKGLGKNEDGIKIPVEAKINQEREGIGNPC) constitute a G-patch domain.

This sequence belongs to the peptidase A2 family. HERV class-II K(HML-2) subfamily. Active as a homodimer. In terms of processing, autoproteolytically processed at the N-terminus. Expected C-terminal autoprocessing not detected. The sequence shown is that of the processed Pro protein.

It catalyses the reaction Processing at the authentic HIV-1 PR recognition site and release of the mature p17 matrix and the p24 capsid protein, as a result of the cleavage of the -SQNY-|-PIVQ- cleavage site.. Retroviral proteases have roles in the processing of the primary translation products and the maturation of the viral particle. Endogenous Pro proteins may have kept, lost or modified their original function during evolution. In Homo sapiens (Human), this protein is Endogenous retrovirus group K member 6 Pro protein (ERVK-6).